The following is a 132-amino-acid chain: Small ribosomal subunit protein uS11 (132 aa).

The protein belongs to the universal ribosomal protein uS11 family. As to quaternary structure, part of the 30S ribosomal subunit. Interacts with proteins S7 and S18. Binds to IF-3.

In terms of biological role, located on the platform of the 30S subunit, it bridges several disparate RNA helices of the 16S rRNA. Forms part of the Shine-Dalgarno cleft in the 70S ribosome. The protein is Small ribosomal subunit protein uS11 of Alcanivorax borkumensis (strain ATCC 700651 / DSM 11573 / NCIMB 13689 / SK2).